Consider the following 396-residue polypeptide: ATP-dependent RNA helicase eIF4A (396 aa).

The short motif at 23-51 (YEFDDMNLNEKLLRGVFGYGFNKPSAIQQ) is the Q motif element. One can recognise a Helicase ATP-binding domain in the interval 54–223 (IMPIIEGNDV…AKFMQNPVRI (170 aa)). Residue 67–74 (AQSGTGKT) coordinates ATP. Positions 171-174 (DEAD) match the DEAD box motif. The Helicase C-terminal domain maps to 234 to 395 (GIKQFYVNVE…ELPSDIGTLF (162 aa)).

Belongs to the DEAD box helicase family. eIF4A subfamily. Component of the eIF4F complex, which composition varies with external and internal environmental conditions. It is composed of at least eIF4A, eIF4E and eIF4G.

The protein resides in the cytoplasm. The catalysed reaction is ATP + H2O = ADP + phosphate + H(+). Functionally, ATP-dependent RNA helicase which is a subunit of the eIF4F complex involved in cap recognition and is required for mRNA binding to ribosome. In the current model of translation initiation, eIF4A unwinds RNA secondary structures in the 5'-UTR of mRNAs which is necessary to allow efficient binding of the small ribosomal subunit, and subsequent scanning for the initiator codon. This chain is ATP-dependent RNA helicase eIF4A (TIF1), found in Candida glabrata (strain ATCC 2001 / BCRC 20586 / JCM 3761 / NBRC 0622 / NRRL Y-65 / CBS 138) (Yeast).